Reading from the N-terminus, the 360-residue chain is UDP-N-acetylglucosamine--N-acetylmuramyl-(pentapeptide) pyrophosphoryl-undecaprenol N-acetylglucosamine transferase (360 aa).

UDP-N-acetyl-alpha-D-glucosamine-binding positions include 11-13, Asn-120, Arg-161, Ser-188, and Gln-282; that span reads TGG.

The protein belongs to the glycosyltransferase 28 family. MurG subfamily.

The protein localises to the cell inner membrane. The enzyme catalyses di-trans,octa-cis-undecaprenyl diphospho-N-acetyl-alpha-D-muramoyl-L-alanyl-D-glutamyl-meso-2,6-diaminopimeloyl-D-alanyl-D-alanine + UDP-N-acetyl-alpha-D-glucosamine = di-trans,octa-cis-undecaprenyl diphospho-[N-acetyl-alpha-D-glucosaminyl-(1-&gt;4)]-N-acetyl-alpha-D-muramoyl-L-alanyl-D-glutamyl-meso-2,6-diaminopimeloyl-D-alanyl-D-alanine + UDP + H(+). It functions in the pathway cell wall biogenesis; peptidoglycan biosynthesis. In terms of biological role, cell wall formation. Catalyzes the transfer of a GlcNAc subunit on undecaprenyl-pyrophosphoryl-MurNAc-pentapeptide (lipid intermediate I) to form undecaprenyl-pyrophosphoryl-MurNAc-(pentapeptide)GlcNAc (lipid intermediate II). The polypeptide is UDP-N-acetylglucosamine--N-acetylmuramyl-(pentapeptide) pyrophosphoryl-undecaprenol N-acetylglucosamine transferase (Synechococcus sp. (strain RCC307)).